A 200-amino-acid polypeptide reads, in one-letter code: Adenylate kinase (200 aa).

11–16 (GAGKGT) lines the ATP pocket. The segment at 31-60 (STGDIFRQNIKDRTELGQQVQALVDAGNYV) is NMP. Residues T32, R37, 58–60 (NYV), 86–89 (GYPR), and Q93 contribute to the AMP site. Residues 127-137 (RRAAEQGRADD) are LID. R128 is an ATP binding site. 2 residues coordinate AMP: R134 and R145. G173 is an ATP binding site.

The protein belongs to the adenylate kinase family. In terms of assembly, monomer.

It localises to the cytoplasm. The enzyme catalyses AMP + ATP = 2 ADP. Its pathway is purine metabolism; AMP biosynthesis via salvage pathway; AMP from ADP: step 1/1. Catalyzes the reversible transfer of the terminal phosphate group between ATP and AMP. Plays an important role in cellular energy homeostasis and in adenine nucleotide metabolism. The chain is Adenylate kinase from Clavibacter michiganensis subsp. michiganensis (strain NCPPB 382).